The sequence spans 106 residues: Pyrimidine/purine nucleoside phosphorylase (106 aa).

This sequence belongs to the nucleoside phosphorylase PpnP family.

The catalysed reaction is a purine D-ribonucleoside + phosphate = a purine nucleobase + alpha-D-ribose 1-phosphate. It catalyses the reaction adenosine + phosphate = alpha-D-ribose 1-phosphate + adenine. It carries out the reaction cytidine + phosphate = cytosine + alpha-D-ribose 1-phosphate. The enzyme catalyses guanosine + phosphate = alpha-D-ribose 1-phosphate + guanine. The catalysed reaction is inosine + phosphate = alpha-D-ribose 1-phosphate + hypoxanthine. It catalyses the reaction thymidine + phosphate = 2-deoxy-alpha-D-ribose 1-phosphate + thymine. It carries out the reaction uridine + phosphate = alpha-D-ribose 1-phosphate + uracil. The enzyme catalyses xanthosine + phosphate = alpha-D-ribose 1-phosphate + xanthine. Catalyzes the phosphorolysis of diverse nucleosides, yielding D-ribose 1-phosphate and the respective free bases. Can use uridine, adenosine, guanosine, cytidine, thymidine, inosine and xanthosine as substrates. Also catalyzes the reverse reactions. The sequence is that of Pyrimidine/purine nucleoside phosphorylase from Burkholderia multivorans (strain ATCC 17616 / 249).